Here is a 330-residue protein sequence, read N- to C-terminus: Cytoskeleton protein RodZ (330 aa).

At 1–111 (MNTEATQDHQ…LGKRRKKRDG (111 aa)) the chain is on the cytoplasmic side. The HTH cro/C1-type domain occupies 19–71 (LRHAREQLGLSQQAVAERLCLKVSTVRDIEDDKAPADLASTFLRGYIRSYARL). The H-T-H motif DNA-binding region spans 30–49 (QQAVAERLCLKVSTVRDIED). A helical; Signal-anchor for type II membrane protein membrane pass occupies residues 112–132 (WLMSFTWLVLFVVIGLSGAWW). At 133–330 (WQDHKAQQEE…TLNAEQSPAQ (198 aa)) the chain is on the periplasmic side. The span at 146–166 (MADQSSAELNGGDANSQNVPL) shows a compositional bias: polar residues. Residues 146–237 (MADQSSAELN…ASPLPTDQAN (92 aa)) form a disordered region. Composition is skewed to low complexity over residues 176-202 (TDSAANSAPTDTASTPTTSAPAQTPAD) and 216-233 (TAGTAPTTPATPASPLPT).

It belongs to the RodZ family.

It localises to the cell inner membrane. Its function is as follows. Cytoskeletal protein that is involved in cell-shape control through regulation of the length of the long axis. The chain is Cytoskeleton protein RodZ from Klebsiella pneumoniae (strain 342).